A 316-amino-acid polypeptide reads, in one-letter code: 2,3-dihydroxyphenylpropionate/2,3-dihydroxicinnamic acid 1,2-dioxygenase (316 aa).

His115 acts as the Proton donor in catalysis. His179 acts as the Proton acceptor in catalysis.

The protein belongs to the LigB/MhpB extradiol dioxygenase family. As to quaternary structure, homotetramer. The cofactor is Fe(2+).

The enzyme catalyses 3-(2,3-dihydroxyphenyl)propanoate + O2 = (2Z,4E)-2-hydroxy-6-oxonona-2,4-dienedioate + H(+). The catalysed reaction is (2E)-3-(2,3-dihydroxyphenyl)prop-2-enoate + O2 = (2Z,4E,7E)-2-hydroxy-6-oxonona-2,4,7-trienedioate + H(+). Its pathway is aromatic compound metabolism; 3-phenylpropanoate degradation. Catalyzes the non-heme iron(II)-dependent oxidative cleavage of 2,3-dihydroxyphenylpropionic acid and 2,3-dihydroxicinnamic acid into 2-hydroxy-6-ketononadienedioate and 2-hydroxy-6-ketononatrienedioate, respectively. The protein is 2,3-dihydroxyphenylpropionate/2,3-dihydroxicinnamic acid 1,2-dioxygenase of Paraburkholderia xenovorans (strain LB400).